The primary structure comprises 99 residues: Protein translation factor SUI1 homolog (99 aa).

Belongs to the SUI1 family.

In Sulfolobus acidocaldarius (strain ATCC 33909 / DSM 639 / JCM 8929 / NBRC 15157 / NCIMB 11770), this protein is Protein translation factor SUI1 homolog.